We begin with the raw amino-acid sequence, 116 residues long: uncharacterized protein (116 aa).

The signal sequence occupies residues 1–15; the sequence is MKKYFLILASFMLVA.

This is an uncharacterized protein from Haemophilus influenzae (strain ATCC 51907 / DSM 11121 / KW20 / Rd).